Consider the following 549-residue polypeptide: FMRFamide receptor (549 aa).

The Extracellular portion of the chain corresponds to methionine 1–glycine 117. Asparagine 59, asparagine 70, and asparagine 93 each carry an N-linked (GlcNAc...) asparagine glycan. A helical membrane pass occupies residues valine 118–leucine 138. Topologically, residues serine 139–aspartate 158 are cytoplasmic. Residues threonine 159–glycine 179 traverse the membrane as a helical segment. Topologically, residues histidine 180–phenylalanine 181 are extracellular. A helical transmembrane segment spans residues phenylalanine 182–isoleucine 202. Topologically, residues alanine 203–lysine 238 are cytoplasmic. A helical membrane pass occupies residues isoleucine 239 to valine 259. Residues leucine 260–asparagine 289 lie on the Extracellular side of the membrane. The chain crosses the membrane as a helical span at residues isoleucine 290–isoleucine 310. At leucine 311–threonine 341 the chain is on the cytoplasmic side. The chain crosses the membrane as a helical span at residues methionine 342–isoleucine 362. At serine 363–lysine 376 the chain is on the extracellular side. The chain crosses the membrane as a helical span at residues isoleucine 377–glycine 397. At glutamate 398 to phenylalanine 549 the chain is on the cytoplasmic side.

Belongs to the G-protein coupled receptor 1 family. Expressed in ovaries, heads and bodies. Expressed in dopaminergic neurons.

The protein localises to the cell membrane. Functionally, a receptor for the FMRFamide peptides. Reacts with high affinity to FMRFamide and intrinsic FMRFamide-related peptides. By stimulating intracellular calcium signaling through the inositol 1,4,5-trisphosphate receptor, Itpr, in dopaminergic neurons, may be involved in the maintenance of neuronal excitability and in the regulation of flight bout duration. The protein is FMRFamide receptor of Drosophila melanogaster (Fruit fly).